The primary structure comprises 416 residues: Adenylosuccinate synthetase (416 aa).

GTP is bound by residues 13–19 (GDEGKGK) and 41–43 (GHT). Residue aspartate 14 is the Proton acceptor of the active site. Residues aspartate 14 and glycine 41 each contribute to the Mg(2+) site. IMP is bound by residues 14–17 (DEGK), 39–42 (NAGH), threonine 126, arginine 140, glutamine 220, threonine 235, and arginine 299. Catalysis depends on histidine 42, which acts as the Proton donor. 295–301 (VSTGRKR) contacts substrate. GTP-binding positions include arginine 301, 327–329 (KLD), and 405–407 (STS).

Belongs to the adenylosuccinate synthetase family. In terms of assembly, homodimer. It depends on Mg(2+) as a cofactor.

The protein localises to the cytoplasm. It catalyses the reaction IMP + L-aspartate + GTP = N(6)-(1,2-dicarboxyethyl)-AMP + GDP + phosphate + 2 H(+). The protein operates within purine metabolism; AMP biosynthesis via de novo pathway; AMP from IMP: step 1/2. In terms of biological role, plays an important role in the de novo pathway of purine nucleotide biosynthesis. Catalyzes the first committed step in the biosynthesis of AMP from IMP. In Campylobacter jejuni subsp. jejuni serotype O:2 (strain ATCC 700819 / NCTC 11168), this protein is Adenylosuccinate synthetase.